The primary structure comprises 180 residues: MASSVLSSAAVATRSNVAQANMVAPFTGLKSAASFPVSRKQNLDITSIASNGGRVQCMQVWPPINKKKYETLSYLPDLSVEQLLSEIEYLLKNGWVPCLEFETEHGFVYREHHKSPGYYDGRYWTMWKLPMFGCTDATQVLAEVEEAKKAYPQAWIRIIGFDNVRQVQCISFIAYKPEGY.

Residues M1–Q56 constitute a chloroplast transit peptide.

The protein belongs to the RuBisCO small chain family. In terms of assembly, heterohexadecamer of 8 large and 8 small subunits. (Microbial infection) Binds to tobamovirus movement protein at the plasmodesmata (e.g. tomato mosaic virus MP AC P69513); this interaction seems required for viral systemic movement.

It is found in the plastid. Its subcellular location is the chloroplast. The protein resides in the cell junction. The protein localises to the plasmodesma. Its function is as follows. RuBisCO catalyzes two reactions: the carboxylation of D-ribulose 1,5-bisphosphate, the primary event in carbon dioxide fixation, as well as the oxidative fragmentation of the pentose substrate. Both reactions occur simultaneously and in competition at the same active site. Although the small subunit is not catalytic it is essential for maximal activity. Involved in antiviral defenses. In terms of biological role, (Microbial infection) Required for tobamovirus movement (e.g. tobacco mosaic virus (TMV)). The protein is Ribulose bisphosphate carboxylase small subunit, chloroplastic of Nicotiana benthamiana.